A 241-amino-acid chain; its full sequence is NH(3)-dependent NAD(+) synthetase (241 aa).

29–36 is an ATP binding site; the sequence is GISGGIDS. Aspartate 35 provides a ligand contact to Mg(2+). Residue arginine 110 participates in deamido-NAD(+) binding. A Mg(2+)-binding site is contributed by glutamate 135. Deamido-NAD(+)-binding residues include lysine 143 and aspartate 150. ATP-binding residues include lysine 159 and serine 181. Residue 226 to 227 participates in deamido-NAD(+) binding; the sequence is HK.

This sequence belongs to the NAD synthetase family. Homodimer.

The enzyme catalyses deamido-NAD(+) + NH4(+) + ATP = AMP + diphosphate + NAD(+) + H(+). It functions in the pathway cofactor biosynthesis; NAD(+) biosynthesis; NAD(+) from deamido-NAD(+) (ammonia route): step 1/1. Catalyzes the ATP-dependent amidation of deamido-NAD to form NAD. Uses ammonia as a nitrogen source. This chain is NH(3)-dependent NAD(+) synthetase, found in Finegoldia magna (strain ATCC 29328 / DSM 20472 / WAL 2508) (Peptostreptococcus magnus).